The chain runs to 343 residues: Probable siderophore transport system permease protein YfhA (343 aa).

Helical transmembrane passes span 15-35 (WIVF…SAGL), 69-89 (ILTA…LQGL), 97-117 (PDII…MMFF), 130-150 (WLPA…YLLA), 160-180 (LVLI…LLMI), 204-224 (QHVK…FVAL), 249-269 (FFLL…AGTI), 289-309 (GALL…ADIV), and 317-337 (VEVP…IYLL).

The protein belongs to the binding-protein-dependent transport system permease family. FecCD subfamily. The complex is composed of one ATP-binding protein (YusV), two transmembrane proteins (YfiZ and YfhA) and a solute-binding protein (YfiY).

It is found in the cell membrane. In terms of biological role, part of the ABC transporter complex YfiYZ/YfhA/YusV involved in import of the iron-hydroxamate siderophores schizokinen, arthrobactin and corprogen. This is Probable siderophore transport system permease protein YfhA (yfhA) from Bacillus subtilis (strain 168).